The primary structure comprises 261 residues: Thiazole synthase (261 aa).

Lys102 (schiff-base intermediate with DXP) is an active-site residue. 1-deoxy-D-xylulose 5-phosphate is bound by residues Gly163, 189–190 (AG), and 211–212 (NT).

This sequence belongs to the ThiG family. In terms of assembly, homotetramer. Forms heterodimers with either ThiH or ThiS.

It is found in the cytoplasm. It carries out the reaction [ThiS sulfur-carrier protein]-C-terminal-Gly-aminoethanethioate + 2-iminoacetate + 1-deoxy-D-xylulose 5-phosphate = [ThiS sulfur-carrier protein]-C-terminal Gly-Gly + 2-[(2R,5Z)-2-carboxy-4-methylthiazol-5(2H)-ylidene]ethyl phosphate + 2 H2O + H(+). The protein operates within cofactor biosynthesis; thiamine diphosphate biosynthesis. In terms of biological role, catalyzes the rearrangement of 1-deoxy-D-xylulose 5-phosphate (DXP) to produce the thiazole phosphate moiety of thiamine. Sulfur is provided by the thiocarboxylate moiety of the carrier protein ThiS. In vitro, sulfur can be provided by H(2)S. This chain is Thiazole synthase, found in Acinetobacter baylyi (strain ATCC 33305 / BD413 / ADP1).